We begin with the raw amino-acid sequence, 1604 residues long: Transposon Ty1-DR4 Gag-Pol polyprotein (1604 aa).

Polar residues-rich tracts occupy residues 1–23 (MESQQLSQHSPISHGSACASVTS), 48–60 (TKANSQQTTTPAS), and 127–152 (QSQFPQYPSSVGTPLSTPSPESGNTF). Disordered stretches follow at residues 1 to 93 (MESQ…MMTQ), 126 to 174 (PQSQ…PPPM), and 352 to 421 (GSRN…SKST). Residues 153-165 (TDSSSADSDMTST) show a composition bias toward low complexity. Positions 299–401 (NNGIHINNKV…NSKSKTARAH (103 aa)) are RNA-binding. Over residues 402–418 (NVSTSNNSPSTDNDSIS) the composition is skewed to low complexity. Ser416 bears the Phosphoserine mark. Catalysis depends on Asp461, which acts as the For protease activity; shared with dimeric partner. The tract at residues 583–640 (NVHTSESTRKYPYPFIHRMLAHANAQTIRYSLKNNTITYFNESDVDWSSAIDYQCPDC) is integrase-type zinc finger-like. Positions 660 to 835 (NSYEPFQYLH…AGLDISTLLP (176 aa)) constitute an Integrase catalytic domain. Residues Asp671 and Asp736 each coordinate Mg(2+). 3 disordered regions span residues 956 to 1087 (SKAV…ETEK), 1092 to 1111 (RSPSIDASPPENNSSHNIVP), and 1130 to 1187 (DLPL…DNET). Positions 960 to 969 (SPTDSTPPST) are enriched in low complexity. Polar residues predominate over residues 1005 to 1015 (STPQISNIEST). Positions 1038-1053 (ESSHASKSKDFRHSDS) are enriched in basic and acidic residues. Composition is skewed to polar residues over residues 1054-1082 (YSENETNHTNVPISSTGGTNNKTVPQISD) and 1101-1111 (PENNSSHNIVP). The short motif at 1178–1212 (KKRSLEDNETEIKVSRDTWNTKNMRSLEPPRSKKR) is the Bipartite nuclear localization signal element. One can recognise a Reverse transcriptase Ty1/copia-type domain in the interval 1338–1476 (NNYYITQLDI…DILGLEIKYQ (139 aa)). The Mg(2+) site is built by Asp1346, Asp1427, and Asp1428.

As to quaternary structure, the capsid protein forms a homotrimer, from which the VLPs are assembled. The protease is a homodimer, whose active site consists of two apposed aspartic acid residues. Post-translationally, initially, virus-like particles (VLPs) are composed of the structural unprocessed proteins Gag and Gag-Pol, and also contain the host initiator methionine tRNA (tRNA(i)-Met) which serves as a primer for minus-strand DNA synthesis, and a dimer of genomic Ty RNA. Processing of the polyproteins occurs within the particle and proceeds by an ordered pathway, called maturation. First, the protease (PR) is released by autocatalytic cleavage of the Gag-Pol polyprotein yielding capsid protein p45 and a Pol-p154 precursor protein. This cleavage is a prerequisite for subsequent processing of Pol-p154 at the remaining sites to release the mature structural and catalytic proteins. Maturation takes place prior to the RT reaction and is required to produce transposition-competent VLPs.

The protein localises to the cytoplasm. It localises to the nucleus. The enzyme catalyses DNA(n) + a 2'-deoxyribonucleoside 5'-triphosphate = DNA(n+1) + diphosphate. It carries out the reaction Endonucleolytic cleavage to 5'-phosphomonoester.. Its function is as follows. Capsid protein (CA) is the structural component of the virus-like particle (VLP), forming the shell that encapsulates the retrotransposons dimeric RNA genome. The particles are assembled from trimer-clustered units and there are holes in the capsid shells that allow for the diffusion of macromolecules. CA also has nucleocapsid-like chaperone activity, promoting primer tRNA(i)-Met annealing to the multipartite primer-binding site (PBS), dimerization of Ty1 RNA and initiation of reverse transcription. Functionally, the aspartyl protease (PR) mediates the proteolytic cleavages of the Gag and Gag-Pol polyproteins after assembly of the VLP. In terms of biological role, reverse transcriptase/ribonuclease H (RT) is a multifunctional enzyme that catalyzes the conversion of the retro-elements RNA genome into dsDNA within the VLP. The enzyme displays a DNA polymerase activity that can copy either DNA or RNA templates, and a ribonuclease H (RNase H) activity that cleaves the RNA strand of RNA-DNA heteroduplexes during plus-strand synthesis and hydrolyzes RNA primers. The conversion leads to a linear dsDNA copy of the retrotransposon that includes long terminal repeats (LTRs) at both ends. Integrase (IN) targets the VLP to the nucleus, where a subparticle preintegration complex (PIC) containing at least integrase and the newly synthesized dsDNA copy of the retrotransposon must transit the nuclear membrane. Once in the nucleus, integrase performs the integration of the dsDNA into the host genome. The sequence is that of Transposon Ty1-DR4 Gag-Pol polyprotein (TY1B-DR4) from Saccharomyces cerevisiae (strain ATCC 204508 / S288c) (Baker's yeast).